The following is a 175-amino-acid chain: Phosphopantetheine adenylyltransferase (175 aa).

Substrate is bound at residue serine 10. ATP contacts are provided by residues 10–11 (SF) and histidine 18. Positions 42, 74, and 88 each coordinate substrate. ATP-binding positions include 89–91 (GMR), glutamate 99, and 124–130 (WIFTSSS).

Belongs to the bacterial CoaD family. Homohexamer. Mg(2+) is required as a cofactor.

The protein localises to the cytoplasm. The enzyme catalyses (R)-4'-phosphopantetheine + ATP + H(+) = 3'-dephospho-CoA + diphosphate. Its pathway is cofactor biosynthesis; coenzyme A biosynthesis; CoA from (R)-pantothenate: step 4/5. Its function is as follows. Reversibly transfers an adenylyl group from ATP to 4'-phosphopantetheine, yielding dephospho-CoA (dPCoA) and pyrophosphate. This is Phosphopantetheine adenylyltransferase from Desulfatibacillum aliphaticivorans.